Reading from the N-terminus, the 694-residue chain is Ferric reductase transmembrane component 5 (694 aa).

A signal peptide spans methionine 1–alanine 19. Residues lysine 20 to tyrosine 163 lie on the Extracellular side of the membrane. A glycan (N-linked (GlcNAc...) asparagine) is linked at asparagine 117. The chain crosses the membrane as a helical span at residues glycine 164–leucine 184. Residues asparagine 185–tryptophan 222 are Cytoplasmic-facing. Residues phenylalanine 223–leucine 243 form a helical membrane-spanning segment. The Extracellular portion of the chain corresponds to histidine 244 to leucine 267. Residues isoleucine 268–phenylalanine 288 form a helical membrane-spanning segment. The Ferric oxidoreductase domain occupies alanine 274–alanine 408. Topologically, residues glycine 289 to lysine 311 are cytoplasmic. Residues histidine 310 and histidine 324 each contribute to the heme site. A helical membrane pass occupies residues tryptophan 312–isoleucine 334. At glutamate 335–tryptophan 347 the chain is on the extracellular side. The chain crosses the membrane as a helical span at residues threonine 348 to phenylalanine 368. Residues arginine 369–histidine 371 are Cytoplasmic-facing. A helical transmembrane segment spans residues tyrosine 372–tryptophan 392. The heme site is built by histidine 380 and histidine 394. Topologically, residues lysine 393–tryptophan 403 are extracellular. The chain crosses the membrane as a helical span at residues isoleucine 404–isoleucine 424. In terms of domain architecture, FAD-binding FR-type spans leucine 409–threonine 528. Topologically, residues phenylalanine 425 to tryptophan 694 are cytoplasmic. Histidine 473 to aspartate 479 provides a ligand contact to FAD. NADP(+) is bound by residues glycine 520–glycine 523 and cysteine 660–glycine 661.

This sequence belongs to the ferric reductase (FRE) family. It depends on FAD as a cofactor.

It is found in the cell membrane. The catalysed reaction is 2 a Fe(II)-siderophore + NADP(+) + H(+) = 2 a Fe(III)-siderophore + NADPH. Functionally, metalloreductase responsible for reducing extracellular iron and copper prior to import. Catalyzes the reductive uptake of Fe(3+)-salts and Fe(3+) bound to catecholate or hydroxamate siderophores. Fe(3+) is reduced to Fe(2+), which then dissociates from the siderophore and can be imported by the high-affinity Fe(2+) transport complex in the plasma membrane. The protein is Ferric reductase transmembrane component 5 (FRE5) of Saccharomyces cerevisiae (strain ATCC 204508 / S288c) (Baker's yeast).